Here is an 80-residue protein sequence, read N- to C-terminus: Cytochrome c oxidase subunit 7B, mitochondrial (80 aa).

The N-terminal 24 residues, 1–24, are a transit peptide targeting the mitochondrion; that stretch reads MFPLVKSALNRLQVRSIQQTMARQ. The Mitochondrial matrix segment spans residues 25-32; it reads SHQKRTPD. A helical membrane pass occupies residues 33 to 59; sequence FHDKYGNAVLASGATFCIVTWTYVATQ. At 60–80 the chain is on the mitochondrial intermembrane side; that stretch reads VGIEWNLSPVGRVTPKEWRNQ.

Belongs to the cytochrome c oxidase VIIb family. Component of the cytochrome c oxidase (complex IV, CIV), a multisubunit enzyme composed of 14 subunits. The complex is composed of a catalytic core of 3 subunits MT-CO1, MT-CO2 and MT-CO3, encoded in the mitochondrial DNA, and 11 supernumerary subunits COX4I1 (or COX4I2), COX5A, COX5B, COX6A1 (or COX6A2), COX6B1 (or COX6B2), COX6C, COX7A2 (or COX7A1), COX7B, COX7C, COX8A and NDUFA4, which are encoded in the nuclear genome. The complex exists as a monomer or a dimer and forms supercomplexes (SCs) in the inner mitochondrial membrane with NADH-ubiquinone oxidoreductase (complex I, CI) and ubiquinol-cytochrome c oxidoreductase (cytochrome b-c1 complex, complex III, CIII), resulting in different assemblies (supercomplex SCI(1)III(2)IV(1) and megacomplex MCI(2)III(2)IV(2)).

It is found in the mitochondrion inner membrane. Its pathway is energy metabolism; oxidative phosphorylation. Component of the cytochrome c oxidase, the last enzyme in the mitochondrial electron transport chain which drives oxidative phosphorylation. The respiratory chain contains 3 multisubunit complexes succinate dehydrogenase (complex II, CII), ubiquinol-cytochrome c oxidoreductase (cytochrome b-c1 complex, complex III, CIII) and cytochrome c oxidase (complex IV, CIV), that cooperate to transfer electrons derived from NADH and succinate to molecular oxygen, creating an electrochemical gradient over the inner membrane that drives transmembrane transport and the ATP synthase. Cytochrome c oxidase is the component of the respiratory chain that catalyzes the reduction of oxygen to water. Electrons originating from reduced cytochrome c in the intermembrane space (IMS) are transferred via the dinuclear copper A center (CU(A)) of subunit 2 and heme A of subunit 1 to the active site in subunit 1, a binuclear center (BNC) formed by heme A3 and copper B (CU(B)). The BNC reduces molecular oxygen to 2 water molecules using 4 electrons from cytochrome c in the IMS and 4 protons from the mitochondrial matrix. Plays a role in proper central nervous system (CNS) development in vertebrates. This chain is Cytochrome c oxidase subunit 7B, mitochondrial (COX7B), found in Homo sapiens (Human).